Reading from the N-terminus, the 542-residue chain is Chondroitin sulfate N-acetylgalactosaminyltransferase 2 (542 aa).

Over 1-13 the chain is Cytoplasmic; the sequence is MSRRGSILHSRTQ. A helical; Signal-anchor for type II membrane protein membrane pass occupies residues 14–34; the sequence is WLLLGLALLFSLVLFMYLLEC. The Lumenal segment spans residues 35–542; the sequence is APQTDGNASL…AYRTNSETAG (508 aa). N-linked (GlcNAc...) asparagine glycosylation occurs at Asn-41. Residues 59–105 adopt a coiled-coil conformation; sequence ALLQEQEEHYQTRATSLKRQIAQLKQELQDMSEKMRALQERKKLGAN. Asn-333 carries an N-linked (GlcNAc...) asparagine glycan. A divalent metal cation contacts are provided by Asp-369 and His-486.

It belongs to the chondroitin N-acetylgalactosaminyltransferase family.

It localises to the golgi apparatus. Its subcellular location is the golgi stack membrane. The enzyme catalyses 3-O-(beta-D-GlcA-(1-&gt;3)-beta-D-Gal-(1-&gt;3)-beta-D-Gal-(1-&gt;4)-beta-D-Xyl)-L-seryl-[protein] + UDP-N-acetyl-alpha-D-galactosamine = 3-O-(beta-D-GalNAc-(1-&gt;4)-beta-D-GlcA-(1-&gt;3)-beta-D-Gal-(1-&gt;3)-beta-D-Gal-(1-&gt;4)-beta-D-Xyl)-L-seryl-[protein] + UDP + H(+). Functionally, transfers 1,4-N-acetylgalactosamine (GalNAc) from UDP-GalNAc to the non-reducing end of glucuronic acid (GlcUA). Required for addition of the first GalNAc to the core tetrasaccharide linker and for elongation of chondroitin chains. This chain is Chondroitin sulfate N-acetylgalactosaminyltransferase 2 (Csgalnact2), found in Mus musculus (Mouse).